The chain runs to 172 residues: Adenine phosphoribosyltransferase (172 aa).

This sequence belongs to the purine/pyrimidine phosphoribosyltransferase family. In terms of assembly, homodimer.

It localises to the cytoplasm. The enzyme catalyses AMP + diphosphate = 5-phospho-alpha-D-ribose 1-diphosphate + adenine. It functions in the pathway purine metabolism; AMP biosynthesis via salvage pathway; AMP from adenine: step 1/1. Its function is as follows. Catalyzes a salvage reaction resulting in the formation of AMP, that is energically less costly than de novo synthesis. This is Adenine phosphoribosyltransferase from Prochlorococcus marinus (strain MIT 9211).